The primary structure comprises 292 residues: GTP cyclohydrolase FolE2 (292 aa).

It belongs to the GTP cyclohydrolase IV family.

The catalysed reaction is GTP + H2O = 7,8-dihydroneopterin 3'-triphosphate + formate + H(+). It participates in cofactor biosynthesis; 7,8-dihydroneopterin triphosphate biosynthesis; 7,8-dihydroneopterin triphosphate from GTP: step 1/1. Functionally, converts GTP to 7,8-dihydroneopterin triphosphate. The chain is GTP cyclohydrolase FolE2 from Staphylococcus saprophyticus subsp. saprophyticus (strain ATCC 15305 / DSM 20229 / NCIMB 8711 / NCTC 7292 / S-41).